The chain runs to 277 residues: Probable xyloglucan endotransglucosylase/hydrolase protein 11 (277 aa).

Positions 1-24 (MRGSDQKILLMVMVVVAVVAAAQG) are cleaved as a signal peptide. The GH16 domain occupies 32-209 (VTWGNNYYQT…PKQMPYIAKF (178 aa)). Asparagine 50 is a glycosylation site (N-linked (GlcNAc...) asparagine). Glutamate 107 (nucleophile) is an active-site residue. Xyloglucan contacts are provided by residues 123–125 (NTN) and 133–135 (GKD). N-linked (GlcNAc...) asparagine glycosylation is present at asparagine 194. 2 disulfide bridges follow: cysteine 217–cysteine 227 and cysteine 260–cysteine 273. Residue arginine 265 coordinates xyloglucan.

This sequence belongs to the glycosyl hydrolase 16 family. XTH group 1 subfamily. In terms of processing, contains at least one intrachain disulfide bond essential for its enzymatic activity.

It is found in the secreted. The protein resides in the cell wall. Its subcellular location is the extracellular space. It localises to the apoplast. It carries out the reaction breaks a beta-(1-&gt;4) bond in the backbone of a xyloglucan and transfers the xyloglucanyl segment on to O-4 of the non-reducing terminal glucose residue of an acceptor, which can be a xyloglucan or an oligosaccharide of xyloglucan.. In terms of biological role, may catalyze xyloglucan endohydrolysis (XEH) and/or endotransglycosylation (XET). Cleaves and religates xyloglucan polymers, an essential constituent of the primary cell wall, and thereby participates in cell wall construction of growing tissues. The sequence is that of Probable xyloglucan endotransglucosylase/hydrolase protein 11 (XTH11) from Arabidopsis thaliana (Mouse-ear cress).